The chain runs to 135 residues: T-cell receptor gamma chain V region 5/10-13 (135 aa).

Positions Met1–Gly18 are cleaved as a signal peptide. The segment at Gln19–Cys114 is v segment. A j segment region spans residues Arg115 to Pro135.

The polypeptide is T-cell receptor gamma chain V region 5/10-13 (Tcrg-V1) (Mus musculus (Mouse)).